Consider the following 111-residue polypeptide: MSEVQQLPIRAVGEYVILVSEPAQAGDEEVTESGLIIGKRVQGEVPELCVVHSVGPDVPEGFCEVGDLTSLPVGQIRNVPHPFVALGLKQPKEIKQKFVTCHYKAIPCLYK.

Homoheptamer. Forms a stable complex with groEL in the presence of ATP.

In terms of biological role, essential for proper capsid assembly. In absence of Gp31 the major capsid protein (Gp23) assembles into 'lumps'. Acts as a co-chaperonin with the host groEL protein. In Escherichia coli (Bacteriophage T4), this protein is Capsid assembly protein Gp31 (31).